The sequence spans 450 residues: 23S rRNA (uracil(1939)-C(5))-methyltransferase RlmD (450 aa).

The region spanning 12–70 is the TRAM domain; the sequence is SKQLSAKLSLNVDQLDHLGAGIAQYQGKVVFIPGALPDETVTVQLTEQKKNYARAKLIK. Residues cysteine 83, cysteine 89, cysteine 92, and cysteine 171 each coordinate [4Fe-4S] cluster. Residues glutamine 283, phenylalanine 312, asparagine 317, glutamate 333, aspartate 360, and aspartate 380 each contribute to the S-adenosyl-L-methionine site. Residue cysteine 406 is the Nucleophile of the active site.

This sequence belongs to the class I-like SAM-binding methyltransferase superfamily. RNA M5U methyltransferase family. RlmD subfamily.

The catalysed reaction is uridine(1939) in 23S rRNA + S-adenosyl-L-methionine = 5-methyluridine(1939) in 23S rRNA + S-adenosyl-L-homocysteine + H(+). Functionally, catalyzes the formation of 5-methyl-uridine at position 1939 (m5U1939) in 23S rRNA. The chain is 23S rRNA (uracil(1939)-C(5))-methyltransferase RlmD from Shewanella sp. (strain W3-18-1).